A 398-amino-acid polypeptide reads, in one-letter code: tRNA(Ile)-lysidine synthase (398 aa).

25–30 (SGGVDS) lines the ATP pocket.

It belongs to the tRNA(Ile)-lysidine synthase family.

It is found in the cytoplasm. The catalysed reaction is cytidine(34) in tRNA(Ile2) + L-lysine + ATP = lysidine(34) in tRNA(Ile2) + AMP + diphosphate + H(+). In terms of biological role, ligates lysine onto the cytidine present at position 34 of the AUA codon-specific tRNA(Ile) that contains the anticodon CAU, in an ATP-dependent manner. Cytidine is converted to lysidine, thus changing the amino acid specificity of the tRNA from methionine to isoleucine. The sequence is that of tRNA(Ile)-lysidine synthase from Francisella tularensis subsp. holarctica (strain OSU18).